Here is a 659-residue protein sequence, read N- to C-terminus: DNA mismatch repair protein MutL (659 aa).

This sequence belongs to the DNA mismatch repair MutL/HexB family.

In terms of biological role, this protein is involved in the repair of mismatches in DNA. It is required for dam-dependent methyl-directed DNA mismatch repair. May act as a 'molecular matchmaker', a protein that promotes the formation of a stable complex between two or more DNA-binding proteins in an ATP-dependent manner without itself being part of a final effector complex. This Ligilactobacillus salivarius (strain UCC118) (Lactobacillus salivarius) protein is DNA mismatch repair protein MutL.